Reading from the N-terminus, the 275-residue chain is uncharacterized protein (275 aa).

Residues 20–22 (RGQ), 41–42 (DI), 80–81 (DV), and N107 contribute to the NAD(+) site. S160 lines the substrate pocket. The active-site Proton acceptor is Y173. Residues K177 and 206–208 (VET) each bind NAD(+).

This sequence belongs to the short-chain dehydrogenases/reductases (SDR) family.

This is an uncharacterized protein from Mycolicibacterium paratuberculosis (strain ATCC BAA-968 / K-10) (Mycobacterium paratuberculosis).